The primary structure comprises 295 residues: Nicotinate-nucleotide pyrophosphorylase [carboxylating] (295 aa).

Residues Arg-107, 142 to 144 (TRK), Arg-166, Lys-176, Glu-206, Asp-227, and 256 to 258 (SGG) each bind substrate.

This sequence belongs to the NadC/ModD family. As to quaternary structure, hexamer formed by 3 homodimers.

It localises to the cytoplasm. It is found in the nucleus. The catalysed reaction is nicotinate beta-D-ribonucleotide + CO2 + diphosphate = quinolinate + 5-phospho-alpha-D-ribose 1-diphosphate + 2 H(+). It participates in cofactor biosynthesis; NAD(+) biosynthesis; nicotinate D-ribonucleotide from quinolinate: step 1/1. Its function is as follows. Involved in the catabolism of quinolinic acid (QA). In Saccharomyces cerevisiae (strain ATCC 204508 / S288c) (Baker's yeast), this protein is Nicotinate-nucleotide pyrophosphorylase [carboxylating] (BNA6).